The following is a 228-amino-acid chain: ATP-dependent dethiobiotin synthetase BioD 1 (228 aa).

13–18 (EVGKTV) lines the ATP pocket. T17 contributes to the Mg(2+) binding site. The active site involves K38. Substrate is bound at residue S42. ATP is bound by residues D55, 116–119 (EGAG), 176–177 (ND), and 205–207 (PWL). Positions 55 and 116 each coordinate Mg(2+).

Belongs to the dethiobiotin synthetase family. As to quaternary structure, homodimer. Requires Mg(2+) as cofactor.

The protein resides in the cytoplasm. The enzyme catalyses (7R,8S)-7,8-diammoniononanoate + CO2 + ATP = (4R,5S)-dethiobiotin + ADP + phosphate + 3 H(+). Its pathway is cofactor biosynthesis; biotin biosynthesis; biotin from 7,8-diaminononanoate: step 1/2. Its function is as follows. Catalyzes a mechanistically unusual reaction, the ATP-dependent insertion of CO2 between the N7 and N8 nitrogen atoms of 7,8-diaminopelargonic acid (DAPA, also called 7,8-diammoniononanoate) to form a ureido ring. The chain is ATP-dependent dethiobiotin synthetase BioD 1 from Salmonella typhimurium (strain LT2 / SGSC1412 / ATCC 700720).